We begin with the raw amino-acid sequence, 615 residues long: Dihydroxy-acid dehydratase (615 aa).

Position 83 (aspartate 83) interacts with Mg(2+). Residue cysteine 124 coordinates [2Fe-2S] cluster. Positions 125 and 126 each coordinate Mg(2+). Lysine 126 carries the N6-carboxylysine modification. Residue cysteine 199 coordinates [2Fe-2S] cluster. Residue glutamate 495 participates in Mg(2+) binding. Catalysis depends on serine 521, which acts as the Proton acceptor.

This sequence belongs to the IlvD/Edd family. In terms of assembly, homodimer. [2Fe-2S] cluster is required as a cofactor. The cofactor is Mg(2+).

The enzyme catalyses (2R)-2,3-dihydroxy-3-methylbutanoate = 3-methyl-2-oxobutanoate + H2O. The catalysed reaction is (2R,3R)-2,3-dihydroxy-3-methylpentanoate = (S)-3-methyl-2-oxopentanoate + H2O. It functions in the pathway amino-acid biosynthesis; L-isoleucine biosynthesis; L-isoleucine from 2-oxobutanoate: step 3/4. It participates in amino-acid biosynthesis; L-valine biosynthesis; L-valine from pyruvate: step 3/4. Its function is as follows. Functions in the biosynthesis of branched-chain amino acids. Catalyzes the dehydration of (2R,3R)-2,3-dihydroxy-3-methylpentanoate (2,3-dihydroxy-3-methylvalerate) into 2-oxo-3-methylpentanoate (2-oxo-3-methylvalerate) and of (2R)-2,3-dihydroxy-3-methylbutanoate (2,3-dihydroxyisovalerate) into 2-oxo-3-methylbutanoate (2-oxoisovalerate), the penultimate precursor to L-isoleucine and L-valine, respectively. The sequence is that of Dihydroxy-acid dehydratase from Corynebacterium jeikeium (strain K411).